The sequence spans 357 residues: Actin, macronuclear (357 aa).

This sequence belongs to the actin family. Post-translationally, met-1 may be removed after translation.

It localises to the cytoplasm. The protein resides in the cytoskeleton. The enzyme catalyses ATP + H2O = ADP + phosphate + H(+). Actins are highly conserved proteins that are involved in various types of cell motility and are ubiquitously expressed in all eukaryotic cells. This Oxytricha fallax protein is Actin, macronuclear.